The primary structure comprises 188 residues: Inosine triphosphate pyrophosphatase (188 aa).

11 to 16 (TGNKHK) is a binding site for ITP. Glutamate 39 contacts Mg(2+). ITP is bound by residues lysine 51, 67-68 (DT), lysine 84, 143-146 (FGWN), and 171-172 (HR).

This sequence belongs to the HAM1 NTPase family. In terms of assembly, homodimer. Mg(2+) is required as a cofactor. The cofactor is Mn(2+).

It localises to the cytoplasm. The protein resides in the nucleus. It carries out the reaction ITP + H2O = IMP + diphosphate + H(+). It catalyses the reaction dITP + H2O = dIMP + diphosphate + H(+). The enzyme catalyses XTP + H2O = XMP + diphosphate + H(+). Pyrophosphatase that hydrolyzes non-canonical purine nucleotides such as inosine triphosphate (ITP), deoxyinosine triphosphate (dITP) or xanthosine 5'-triphosphate (XTP) to their respective monophosphate derivatives. The enzyme does not distinguish between the deoxy- and ribose forms. Probably excludes non-canonical purines from RNA and DNA precursor pools, thus preventing their incorporation into RNA and DNA and avoiding chromosomal lesions. This Schizosaccharomyces pombe (strain 972 / ATCC 24843) (Fission yeast) protein is Inosine triphosphate pyrophosphatase.